A 194-amino-acid chain; its full sequence is RNA polymerase II subunit A C-terminal domain phosphatase SSU72 like protein 4 (194 aa).

This sequence belongs to the SSU72 phosphatase family.

The protein resides in the nucleus. It catalyses the reaction O-phospho-L-seryl-[protein] + H2O = L-seryl-[protein] + phosphate. The catalysed reaction is O-phospho-L-threonyl-[protein] + H2O = L-threonyl-[protein] + phosphate. Protein phosphatase that catalyzes the dephosphorylation of the C-terminal domain of RNA polymerase II. Plays a role in RNA processing and termination. The polypeptide is RNA polymerase II subunit A C-terminal domain phosphatase SSU72 like protein 4 (Homo sapiens (Human)).